The primary structure comprises 340 residues: Ferredoxin--NADP reductase (340 aa).

FAD is bound by residues threonine 20, aspartate 39, glutamine 47, tyrosine 52, valine 92, phenylalanine 126, aspartate 293, and threonine 334.

It belongs to the ferredoxin--NADP reductase type 2 family. In terms of assembly, homodimer. FAD is required as a cofactor.

The enzyme catalyses 2 reduced [2Fe-2S]-[ferredoxin] + NADP(+) + H(+) = 2 oxidized [2Fe-2S]-[ferredoxin] + NADPH. This chain is Ferredoxin--NADP reductase, found in Gluconobacter oxydans (strain 621H) (Gluconobacter suboxydans).